Consider the following 239-residue polypeptide: uncharacterized protein (239 aa).

The next 3 membrane-spanning stretches (helical) occupy residues 125-144 (LAIISFICSPSLSFFLLILY), 149-171 (IFVLFKLFAVEYVRYELVYFLFL), and 197-216 (SVLNLSVSVTILAVLQGILF).

It localises to the cell membrane. This is an uncharacterized protein from Aquifex aeolicus (strain VF5).